The following is a 1353-amino-acid chain: Stress response protein NST1 (1353 aa).

The segment covering 1-12 (MSSKSQQPPTGL) has biased composition (polar residues). Disordered stretches follow at residues 1–66 (MSSK…FFNF), 216–422 (NANA…TQSS), 503–522 (NGLR…VEVD), 531–618 (DHRA…SFGS), 652–694 (RRSV…AEEG), 727–882 (LREL…AKET), 979–1119 (GLKS…DDAF), 1140–1276 (GSLI…GAGV), and 1308–1337 (GGTA…HQQQ). Basic residues predominate over residues 16–25 (AAKKRAKKAA). Positions 26-45 (KQSQNPQPQSAPQTSSQTPA) are enriched in low complexity. The segment covering 46 to 59 (SVPPLPPASVPDPL) has biased composition (pro residues). The segment covering 218-229 (NARSFPSPQQTI) has biased composition (polar residues). The segment covering 242 to 254 (REEEYDDEEEIEE) has biased composition (acidic residues). Over residues 268–277 (KKNKKKKKKG) the composition is skewed to basic residues. Pro residues predominate over residues 287–300 (VEPPAPLPPLPPPS). The segment covering 317 to 330 (LPTHQPQPLSQQPP) has biased composition (low complexity). A compositionally biased stretch (pro residues) spans 331–349 (SLNPLPPPAPASAPTPTPP). Over residues 368–388 (PARSARAAGKAPASAAPPHNA) the composition is skewed to low complexity. Residues 531-541 (DHRAPELHDHD) are compositionally biased toward basic and acidic residues. Residues 542–583 (PDDLDGEESEEYDDDDDYADDDELDDDDIGTDEADVGDEIDE) are compositionally biased toward acidic residues. The span at 654–665 (SVREEQNLRDMQ) shows a compositional bias: basic and acidic residues. Residues 666–681 (EETDEEEEEEDDDESR) are compositionally biased toward acidic residues. Basic and acidic residues-rich tracts occupy residues 682–694 (DEPM…AEEG), 727–750 (LREL…EAQK), and 760–882 (QKAE…AKET). Residues 713 to 944 (AYRERVAKQR…AAQQAQRERA (232 aa)) are a coiled coil. Over residues 1009-1021 (TNATPGRSMQKTP) the composition is skewed to polar residues. Residues 1154-1165 (PTPPAPIAPPNL) show a composition bias toward pro residues. 2 stretches are compositionally biased toward polar residues: residues 1174 to 1187 (SDGQ…LRST) and 1209 to 1220 (QPQQRRPTTSWD).

Belongs to the NST1 family.

It is found in the cytoplasm. In terms of biological role, may act as a negative regulator of salt tolerance. The protein is Stress response protein NST1 (NST1) of Cryptococcus neoformans var. neoformans serotype D (strain B-3501A) (Filobasidiella neoformans).